A 242-amino-acid polypeptide reads, in one-letter code: Putative cellulose biosynthesis protein BcsQ (242 aa).

1–8 provides a ligand contact to ATP; that stretch reads MRGGVGTT.

The protein belongs to the BcsQ family.

A C-terminal pseudogene fragment of BcsQ, which has a premature stop codon at position 6 of the intact protein. The mutation prevents cellulose synthesis, and has polar effects on transcription of downstream gene bcsA and probably also bcsB, bcsZ and bcsC. When the reading frame is restored cellulose biosynthesis is also restored, see (AC P0DP92) for an intact protein. May play a role in subcellular localization of an active cellulose biosynthesis apparatus at the bacterial cell pole. This is Putative cellulose biosynthesis protein BcsQ (bcsQ) from Escherichia coli (strain K12).